The primary structure comprises 382 residues: Lipid-A-disaccharide synthase (382 aa).

This sequence belongs to the LpxB family.

The catalysed reaction is a lipid X + a UDP-2-N,3-O-bis[(3R)-3-hydroxyacyl]-alpha-D-glucosamine = a lipid A disaccharide + UDP + H(+). The protein operates within bacterial outer membrane biogenesis; LPS lipid A biosynthesis. Condensation of UDP-2,3-diacylglucosamine and 2,3-diacylglucosamine-1-phosphate to form lipid A disaccharide, a precursor of lipid A, a phosphorylated glycolipid that anchors the lipopolysaccharide to the outer membrane of the cell. This chain is Lipid-A-disaccharide synthase, found in Alteromonas mediterranea (strain DSM 17117 / CIP 110805 / LMG 28347 / Deep ecotype).